The sequence spans 349 residues: 4-hydroxythreonine-4-phosphate dehydrogenase (349 aa).

Threonine 135 is a binding site for substrate. Residues histidine 170, histidine 215, and histidine 276 each coordinate a divalent metal cation. Lysine 284, asparagine 293, and arginine 302 together coordinate substrate.

It belongs to the PdxA family. Homodimer. The cofactor is a divalent metal cation.

The protein resides in the cytoplasm. The catalysed reaction is 4-(phosphooxy)-L-threonine + NAD(+) = 3-amino-2-oxopropyl phosphate + CO2 + NADH. It participates in cofactor biosynthesis; pyridoxine 5'-phosphate biosynthesis; pyridoxine 5'-phosphate from D-erythrose 4-phosphate: step 4/5. Its function is as follows. Catalyzes the NAD(P)-dependent oxidation of 4-(phosphooxy)-L-threonine (HTP) into 2-amino-3-oxo-4-(phosphooxy)butyric acid which spontaneously decarboxylates to form 3-amino-2-oxopropyl phosphate (AHAP). This is 4-hydroxythreonine-4-phosphate dehydrogenase from Synechococcus sp. (strain JA-3-3Ab) (Cyanobacteria bacterium Yellowstone A-Prime).